Consider the following 688-residue polypeptide: MSYQVLARKWRPKTFADVVGQEHIITALANGLKDNRLHHAYLFSGTRGVGKTSIARLFAKGLNCVHGVTATPCGECENCKAIEQGNFIDLIEIDAASRTKVEDTRELLDNVQYKPVVGRFKVYLIDEVHMLSRHSFNALLKTLEEPPEYVKFLLATTDPQKLPVTILSRCLQFHLKALDETQISQHLAHILTQENIPFEDPALVKLAKAAQGSIRDSLSLTDQAIAMGDRQVTNNVVSNMLGLLDDNYSVDILYALHQGNGELLMRTLQRVADAAGDWDKLLGECAEKLHQIALMQLLPQKSSDNNEHFSFLAKHISPENVQFFYQVIVSGRKDLSNAPNRRIGAEMTLLRALAFHPKFLTAVPKANTTITPPPSTPSAVENTGNYVDVPVLSQSIKSAYSQAKPNKTSIPNLASLSALDALEHLTQLENQERQEHKAESLAVVSETLHHIQELDEEKSHKKMTALPVREMTEPKPKHIEKPTLPSNAAQAPQKNSTEENSSDDNVEIAQDEQEILSADTYRWEWSNPELAKADTGVCPSDIKQAILKDITPELRLKIITQTQQQDQWADIVERSGLTGFSKELALNCFLQSKTDDEINLGLHSEKSHLRQDRSIKNLAEALSKLQGKDIRLTINLDDSNVTTPIEYRRNIYQALREKAQNELQKDSKLQILLNEFDAKLDVESIRPV.

45–52 lines the ATP pocket; sequence GTRGVGKT. The Zn(2+) site is built by Cys64, Cys73, Cys76, and Cys79. The interval 452–506 is disordered; that stretch reads QELDEEKSHKKMTALPVREMTEPKPKHIEKPTLPSNAAQAPQKNSTEENSSDDNV. A compositionally biased stretch (basic and acidic residues) spans 470–481; it reads EMTEPKPKHIEK. The span at 484 to 499 shows a compositional bias: polar residues; that stretch reads LPSNAAQAPQKNSTEE.

It belongs to the DnaX/STICHEL family. As to quaternary structure, DNA polymerase III contains a core (composed of alpha, epsilon and theta chains) that associates with a tau subunit. This core dimerizes to form the POLIII' complex. PolIII' associates with the gamma complex (composed of gamma, delta, delta', psi and chi chains) and with the beta chain to form the complete DNA polymerase III complex.

The catalysed reaction is DNA(n) + a 2'-deoxyribonucleoside 5'-triphosphate = DNA(n+1) + diphosphate. In terms of biological role, DNA polymerase III is a complex, multichain enzyme responsible for most of the replicative synthesis in bacteria. This DNA polymerase also exhibits 3' to 5' exonuclease activity. In Haemophilus influenzae (strain ATCC 51907 / DSM 11121 / KW20 / Rd), this protein is DNA polymerase III subunit tau/gamma (dnaX).